Consider the following 2271-residue polypeptide: Protein Ycf2 (2271 aa).

1628-1635 (GSIGTGRS) contributes to the ATP binding site.

It belongs to the Ycf2 family.

Its subcellular location is the plastid. The protein resides in the chloroplast stroma. Functionally, probable ATPase of unknown function. Its presence in a non-photosynthetic plant (Epifagus virginiana) and experiments in tobacco indicate that it has an essential function which is probably not related to photosynthesis. This is Protein Ycf2 from Illicium oligandrum (Star anise).